A 213-amino-acid polypeptide reads, in one-letter code: MDISVKQMYNIEENGHAMGFLKKFMMENAGAAAARLLDERLEGAPRVLAFAGMGNNGGDALVAARHLAGRGADVTVVLLGNPDGIRTEEARWNWSILEKMPSIKLVSGGSFDASVSPDAIIDGILGTGITGEIREPYLSAIKFINGIQCTKMAIDAPSGLDPQTGEAADPCVKVDFTVTFHRMKEGIPKRKDLTGDVTVQKIGIPPEAEKGVL.

The YjeF N-terminal domain maps to 8-210; it reads MYNIEENGHA…KIGIPPEAEK (203 aa). 55–59 contacts (6S)-NADPHX; it reads NNGGD. The K(+) site is built by Asn-56 and Asp-122. (6S)-NADPHX-binding positions include 126 to 132, Tyr-137, and Asp-155; that span reads GTGITGE. Ser-158 is a K(+) binding site.

This sequence belongs to the NnrE/AIBP family. The cofactor is K(+).

It carries out the reaction (6R)-NADHX = (6S)-NADHX. The enzyme catalyses (6R)-NADPHX = (6S)-NADPHX. Its function is as follows. Catalyzes the epimerization of the S- and R-forms of NAD(P)HX, a damaged form of NAD(P)H that is a result of enzymatic or heat-dependent hydration. This is a prerequisite for the S-specific NAD(P)H-hydrate dehydratase to allow the repair of both epimers of NAD(P)HX. The sequence is that of NAD(P)H-hydrate epimerase from Cenarchaeum symbiosum (strain A).